The primary structure comprises 102 residues: Large ribosomal subunit protein bL21 (102 aa).

This sequence belongs to the bacterial ribosomal protein bL21 family. As to quaternary structure, part of the 50S ribosomal subunit. Contacts protein L20.

This protein binds to 23S rRNA in the presence of protein L20. The chain is Large ribosomal subunit protein bL21 from Ehrlichia canis (strain Jake).